Here is a 385-residue protein sequence, read N- to C-terminus: Cyclin-A3-2 (385 aa).

Residues 1–110 (MADKENSTPA…STSTASPSSG (110 aa)) form a disordered region. 3 stretches are compositionally biased toward low complexity: residues 7 to 41 (STPA…GAPP), 74 to 88 (PSSK…AAAP), and 96 to 110 (PVSS…PSSG).

This sequence belongs to the cyclin family. Cyclin AB subfamily.

This Oryza sativa subsp. japonica (Rice) protein is Cyclin-A3-2 (CYCA3-2).